Here is a 198-residue protein sequence, read N- to C-terminus: Large ribosomal subunit protein bL25 (198 aa).

Belongs to the bacterial ribosomal protein bL25 family. CTC subfamily. Part of the 50S ribosomal subunit; part of the 5S rRNA/L5/L18/L25 subcomplex. Contacts the 5S rRNA. Binds to the 5S rRNA independently of L5 and L18.

Its function is as follows. This is one of the proteins that binds to the 5S RNA in the ribosome where it forms part of the central protuberance. The sequence is that of Large ribosomal subunit protein bL25 from Pseudomonas putida (strain W619).